A 301-amino-acid polypeptide reads, in one-letter code: Phosphatidylglycerol--prolipoprotein diacylglyceryl transferase (301 aa).

Helical transmembrane passes span 17-37, 59-79, and 97-117; these read LAVR…IVVG, MLFY…VLFY, and GGMS…LFAY. An a 1,2-diacyl-sn-glycero-3-phospho-(1'-sn-glycerol)-binding site is contributed by arginine 142. 2 helical membrane passes run 230–250 and 265–285; these read MGAI…TVEF and LSMG…LLVW.

Belongs to the Lgt family.

The protein localises to the cell inner membrane. The catalysed reaction is L-cysteinyl-[prolipoprotein] + a 1,2-diacyl-sn-glycero-3-phospho-(1'-sn-glycerol) = an S-1,2-diacyl-sn-glyceryl-L-cysteinyl-[prolipoprotein] + sn-glycerol 1-phosphate + H(+). The protein operates within protein modification; lipoprotein biosynthesis (diacylglyceryl transfer). Functionally, catalyzes the transfer of the diacylglyceryl group from phosphatidylglycerol to the sulfhydryl group of the N-terminal cysteine of a prolipoprotein, the first step in the formation of mature lipoproteins. The sequence is that of Phosphatidylglycerol--prolipoprotein diacylglyceryl transferase from Paraburkholderia phytofirmans (strain DSM 17436 / LMG 22146 / PsJN) (Burkholderia phytofirmans).